A 432-amino-acid polypeptide reads, in one-letter code: Adenylosuccinate synthetase (432 aa).

Residues 13–19 and 41–43 each bind GTP; these read GDEGKGK and GHT. The Proton acceptor role is filled by aspartate 14. Residues aspartate 14 and glycine 41 each coordinate Mg(2+). Residues 14–17, 39–42, threonine 130, arginine 144, glutamine 225, threonine 240, and arginine 304 contribute to the IMP site; these read DEGK and NAGH. Histidine 42 acts as the Proton donor in catalysis. 300-306 contacts substrate; the sequence is ATTGRRR. GTP contacts are provided by residues arginine 306, 332–334, and 415–417; these read KLD and STG.

This sequence belongs to the adenylosuccinate synthetase family. Homodimer. Requires Mg(2+) as cofactor.

The protein resides in the cytoplasm. The enzyme catalyses IMP + L-aspartate + GTP = N(6)-(1,2-dicarboxyethyl)-AMP + GDP + phosphate + 2 H(+). It functions in the pathway purine metabolism; AMP biosynthesis via de novo pathway; AMP from IMP: step 1/2. Functionally, plays an important role in the de novo pathway of purine nucleotide biosynthesis. Catalyzes the first committed step in the biosynthesis of AMP from IMP. This Sodalis glossinidius (strain morsitans) protein is Adenylosuccinate synthetase.